A 148-amino-acid polypeptide reads, in one-letter code: Transcription antitermination protein NusB (148 aa).

It belongs to the NusB family.

Involved in transcription antitermination. Required for transcription of ribosomal RNA (rRNA) genes. Binds specifically to the boxA antiterminator sequence of the ribosomal RNA (rrn) operons. This is Transcription antitermination protein NusB from Saccharopolyspora erythraea (strain ATCC 11635 / DSM 40517 / JCM 4748 / NBRC 13426 / NCIMB 8594 / NRRL 2338).